The following is a 689-amino-acid chain: Methionine--tRNA ligase (689 aa).

Residues 15 to 25 (PYANGPVHIGH) carry the 'HIGH' region motif. Zn(2+) contacts are provided by Cys-147, Cys-150, Cys-160, and Cys-163. Positions 342–346 (KISTS) match the 'KMSKS' region motif. Thr-345 contacts ATP. A tRNA-binding domain is found at 588–689 (DFAKMDIRVA…AVVNAGSMIG (102 aa)).

The protein belongs to the class-I aminoacyl-tRNA synthetase family. MetG type 1 subfamily. Homodimer. The cofactor is Zn(2+).

It localises to the cytoplasm. It carries out the reaction tRNA(Met) + L-methionine + ATP = L-methionyl-tRNA(Met) + AMP + diphosphate. In terms of biological role, is required not only for elongation of protein synthesis but also for the initiation of all mRNA translation through initiator tRNA(fMet) aminoacylation. This chain is Methionine--tRNA ligase, found in Cytophaga hutchinsonii (strain ATCC 33406 / DSM 1761 / CIP 103989 / NBRC 15051 / NCIMB 9469 / D465).